We begin with the raw amino-acid sequence, 212 residues long: ATP phosphoribosyltransferase (212 aa).

It belongs to the ATP phosphoribosyltransferase family. Short subfamily. Heteromultimer composed of HisG and HisZ subunits.

It is found in the cytoplasm. It catalyses the reaction 1-(5-phospho-beta-D-ribosyl)-ATP + diphosphate = 5-phospho-alpha-D-ribose 1-diphosphate + ATP. The protein operates within amino-acid biosynthesis; L-histidine biosynthesis; L-histidine from 5-phospho-alpha-D-ribose 1-diphosphate: step 1/9. In terms of biological role, catalyzes the condensation of ATP and 5-phosphoribose 1-diphosphate to form N'-(5'-phosphoribosyl)-ATP (PR-ATP). Has a crucial role in the pathway because the rate of histidine biosynthesis seems to be controlled primarily by regulation of HisG enzymatic activity. This is ATP phosphoribosyltransferase from Clostridium botulinum (strain Okra / Type B1).